Here is a 951-residue protein sequence, read N- to C-terminus: Bifunctional glutamine synthetase adenylyltransferase/adenylyl-removing enzyme (951 aa).

Residues 1–445 (MSILPLPALP…VFDELIGDDA (445 aa)) are adenylyl removase. Residues 454-951 (HSSYSSLWQD…VSWNKWLMGA (498 aa)) form an adenylyl transferase region.

Belongs to the GlnE family. Mg(2+) is required as a cofactor.

The catalysed reaction is [glutamine synthetase]-O(4)-(5'-adenylyl)-L-tyrosine + phosphate = [glutamine synthetase]-L-tyrosine + ADP. It catalyses the reaction [glutamine synthetase]-L-tyrosine + ATP = [glutamine synthetase]-O(4)-(5'-adenylyl)-L-tyrosine + diphosphate. Involved in the regulation of glutamine synthetase GlnA, a key enzyme in the process to assimilate ammonia. When cellular nitrogen levels are high, the C-terminal adenylyl transferase (AT) inactivates GlnA by covalent transfer of an adenylyl group from ATP to specific tyrosine residue of GlnA, thus reducing its activity. Conversely, when nitrogen levels are low, the N-terminal adenylyl removase (AR) activates GlnA by removing the adenylyl group by phosphorolysis, increasing its activity. The regulatory region of GlnE binds the signal transduction protein PII (GlnB) which indicates the nitrogen status of the cell. This chain is Bifunctional glutamine synthetase adenylyltransferase/adenylyl-removing enzyme, found in Pectobacterium atrosepticum (strain SCRI 1043 / ATCC BAA-672) (Erwinia carotovora subsp. atroseptica).